The sequence spans 554 residues: Cytochrome P450 monooxygenase himC (554 aa).

The helical transmembrane segment at 52 to 72 (YSVASVAIAGFTALVVSVALY) threads the bilayer. N-linked (GlcNAc...) asparagine glycosylation is found at Asn110, Asn328, Asn414, and Asn425. Heme is bound at residue Cys501.

The protein belongs to the cytochrome P450 family. It depends on heme as a cofactor.

It localises to the membrane. It functions in the pathway secondary metabolite biosynthesis. In terms of biological role, cytochrome P450 monooxygenase; part of the him gene cluster that mediates the biosynthesis of himeic acid A, a ubiquitin-activating enzyme (E1) inhibitor. First, himA, together with the trans-enoyl reductase himH, catalyzes the formation of apolyketide chain, which is then condensed with leucine by the NRPS activity of himA. Dieckmann cyclization and release from himA gives a tetramic acid intermediate as the product of himA PKS-NRPS. HimG then catalyzes alpha-oxidation of the tetramic acid ring, with a subsequent rearrangement to yield apyrone intermediate. Two terminal methyl groups of polyketide and amide side chains are oxidized to carboxylic acids by himC cytochrome P450 monooxygenase to form himeic acid A. Himeic acid A is further converted to himeic acid B and C during culture growth. No gene responsible for pyrone to pyridone conversion was found in the him gene cluster and himeic acid A is non-enzymatically converted to himeic acid C by the incorporation of an ammonium nitrogen atom in a pH5 buffer, and to himeic acid B at a conversion ratio of 50% during incubation in MeOH for 5 days. The sequence is that of Cytochrome P450 monooxygenase himC from Aspergillus japonicus.